A 347-amino-acid polypeptide reads, in one-letter code: S-adenosylmethionine:tRNA ribosyltransferase-isomerase (347 aa).

The protein belongs to the QueA family. Monomer.

It localises to the cytoplasm. The enzyme catalyses 7-aminomethyl-7-carbaguanosine(34) in tRNA + S-adenosyl-L-methionine = epoxyqueuosine(34) in tRNA + adenine + L-methionine + 2 H(+). It participates in tRNA modification; tRNA-queuosine biosynthesis. In terms of biological role, transfers and isomerizes the ribose moiety from AdoMet to the 7-aminomethyl group of 7-deazaguanine (preQ1-tRNA) to give epoxyqueuosine (oQ-tRNA). This is S-adenosylmethionine:tRNA ribosyltransferase-isomerase from Xylella fastidiosa (strain 9a5c).